Reading from the N-terminus, the 289-residue chain is DDRGK domain-containing protein 1 (289 aa).

Topologically, residues 1 to 2 (MD) are lumenal. The helical transmembrane segment at 3–23 (PFILAAIISGIVIIILSIAFL) threads the bilayer. Topologically, residues 24-289 (RVSQVKPQAA…LINLAPVTVP (266 aa)) are cytoplasmic. Residues 65–168 (RHQAALEEEP…DERKKREQEE (104 aa)) are disordered. Residues 70 to 85 (LEEEPEIQEEADEGAP) are compositionally biased toward acidic residues. Residues 87 to 166 (IDQKIDFDDK…AEDERKKREQ (80 aa)) show a composition bias toward basic and acidic residues.

The protein belongs to the DDRGK1 family. Interacts with Atg9; the interaction is transient.

Its subcellular location is the endoplasmic reticulum membrane. Functionally, substrate adapter for ufmylation, the covalent attachment of the ubiquitin-like modifier UFM1 to substrate proteins. Required for ufmylation of Atg9; protects the nervous system during aging, possibly by stabilizing Atg9 and supporting its function. In Bombyx mori (Silk moth), this protein is DDRGK domain-containing protein 1.